A 312-amino-acid chain; its full sequence is Acetyl-coenzyme A carboxylase carboxyl transferase subunit alpha (312 aa).

The CoA carboxyltransferase C-terminal domain occupies R36–T286.

This sequence belongs to the AccA family. As to quaternary structure, acetyl-CoA carboxylase is a heterohexamer composed of biotin carboxyl carrier protein (AccB), biotin carboxylase (AccC) and two subunits each of ACCase subunit alpha (AccA) and ACCase subunit beta (AccD).

The protein resides in the cytoplasm. It carries out the reaction N(6)-carboxybiotinyl-L-lysyl-[protein] + acetyl-CoA = N(6)-biotinyl-L-lysyl-[protein] + malonyl-CoA. It participates in lipid metabolism; malonyl-CoA biosynthesis; malonyl-CoA from acetyl-CoA: step 1/1. Functionally, component of the acetyl coenzyme A carboxylase (ACC) complex. First, biotin carboxylase catalyzes the carboxylation of biotin on its carrier protein (BCCP) and then the CO(2) group is transferred by the carboxyltransferase to acetyl-CoA to form malonyl-CoA. This is Acetyl-coenzyme A carboxylase carboxyl transferase subunit alpha from Helicobacter pylori (strain P12).